Reading from the N-terminus, the 722-residue chain is Probable dipeptidyl-peptidase 5 (722 aa).

The signal sequence occupies residues 1 to 18 (MGALRWLSLAAAASSALA). Asn-75, Asn-78, Asn-86, Asn-94, Asn-151, Asn-253, and Asn-448 each carry an N-linked (GlcNAc...) asparagine glycan. Catalysis depends on Ser-558, which acts as the Charge relay system. N-linked (GlcNAc...) asparagine glycosylation occurs at Asn-605. Active-site charge relay system residues include Asp-641 and His-673.

It belongs to the peptidase S9C family.

It is found in the secreted. Extracellular dipeptidyl-peptidase which removes N-terminal dipeptides sequentially from polypeptides having unsubstituted N-termini. The protein is Probable dipeptidyl-peptidase 5 (dpp5) of Emericella nidulans (strain FGSC A4 / ATCC 38163 / CBS 112.46 / NRRL 194 / M139) (Aspergillus nidulans).